The primary structure comprises 81 residues: High-potential iron-sulfur protein (81 aa).

[4Fe-4S] cluster is bound by residues cysteine 43, cysteine 46, cysteine 59, and cysteine 73.

This sequence belongs to the high-potential iron-sulfur protein (HiPIP) family. Homodimer.

Its function is as follows. Specific class of high-redox-potential 4Fe-4S ferredoxins. Functions in anaerobic electron transport in most purple and in some other photosynthetic bacteria and in at least one genus (Paracoccus) of halophilic, denitrifying bacteria. This chain is High-potential iron-sulfur protein (hip), found in Thiococcus pfennigii (Thiocapsa pfennigii).